The sequence spans 109 residues: MNIFRSLLYFFFTGLCEIGGGYLVWLWLKEGKSIKYALLGWGLLMLYGVLPALQTANFGRVYSAYGGAFVIFSLLWGWKVDRIPPDSYDWLGTLIILIGASVIMYAPRN.

The next 4 helical transmembrane spans lie at 7–27 (LLYF…VWLW), 36–56 (YALL…LQTA), 58–78 (FGRV…LWGW), and 87–107 (SYDW…MYAP).

This sequence belongs to the UPF0060 family.

It localises to the cell inner membrane. The polypeptide is UPF0060 membrane protein PCC8801_1733 (Rippkaea orientalis (strain PCC 8801 / RF-1) (Cyanothece sp. (strain PCC 8801))).